An 83-amino-acid chain; its full sequence is Small ribosomal subunit protein eS21 (83 aa).

This sequence belongs to the eukaryotic ribosomal protein eS21 family. In terms of assembly, component of the 40S small ribosomal subunit.

It is found in the cytoplasm. Its subcellular location is the cytosol. The protein localises to the rough endoplasmic reticulum. In terms of biological role, component of the small ribosomal subunit. The ribosome is a large ribonucleoprotein complex responsible for the synthesis of proteins in the cell. The chain is Small ribosomal subunit protein eS21 (rps21) from Xenopus laevis (African clawed frog).